The sequence spans 229 residues: Orotate phosphoribosyltransferase (229 aa).

Residues Arg-107, Lys-108, Lys-111, His-113, and 133–141 each bind 5-phospho-alpha-D-ribose 1-diphosphate; that span reads EDLTTAGGS. Thr-137 lines the orotate pocket.

Belongs to the purine/pyrimidine phosphoribosyltransferase family. PyrE subfamily. As to quaternary structure, homodimer. It depends on Mg(2+) as a cofactor.

The catalysed reaction is orotidine 5'-phosphate + diphosphate = orotate + 5-phospho-alpha-D-ribose 1-diphosphate. Its pathway is pyrimidine metabolism; UMP biosynthesis via de novo pathway; UMP from orotate: step 1/2. Catalyzes the transfer of a ribosyl phosphate group from 5-phosphoribose 1-diphosphate to orotate, leading to the formation of orotidine monophosphate (OMP). This chain is Orotate phosphoribosyltransferase, found in Rhizobium johnstonii (strain DSM 114642 / LMG 32736 / 3841) (Rhizobium leguminosarum bv. viciae).